Consider the following 370-residue polypeptide: Gap junction delta-4 protein (370 aa).

Over 1–19 (MEGVDLLGFLIITLNCNVT) the chain is Cytoplasmic. Residues 20–40 (MVGKLWFVLTMLLRMLVIVLA) traverse the membrane as a helical segment. At 41-76 (GRPVYQDEQERFVCNTLQPGCANVCYDVFSPVSHLR) the chain is on the extracellular side. A helical membrane pass occupies residues 77 to 97 (FWLIQGVCVLLPSAVFSVYVL). Residues 98 to 146 (HRGATLAALGPRRCPDPREPASGQRRCPRPFGERGGLQVPDFSAGYIIH) lie on the Cytoplasmic side of the membrane. Residues 147–167 (LLLRTLLEAAFGALHYFLFGF) form a helical membrane-spanning segment. The Extracellular portion of the chain corresponds to 168-196 (LAPKKFPCTRPPCTGVVDCYVSRPTEKSL). The chain crosses the membrane as a helical span at residues 197-217 (LMLFLWAVSALSFLLGLADLV). Topologically, residues 218–370 (CSLRRRMRRR…HLRARKSEWV (153 aa)) are cytoplasmic. The interval 224-370 (MRRRPGPPTS…HLRARKSEWV (147 aa)) is disordered. Residues 246-260 (AEGRRTDEEGGREEE) show a composition bias toward basic and acidic residues. Positions 331 to 346 (PSAAPSRLAAPPSCSS) are enriched in low complexity.

Belongs to the connexin family. Delta-type subfamily. In terms of assembly, a connexon is composed of a hexamer of connexins. Expressed in pancreas, kidney, skeletal muscle, liver, placenta, and heart.

It localises to the cell membrane. The protein localises to the cell junction. Its subcellular location is the gap junction. One gap junction consists of a cluster of closely packed pairs of transmembrane channels, the connexons, through which materials of low MW diffuse from one cell to a neighboring cell. The protein is Gap junction delta-4 protein (GJD4) of Homo sapiens (Human).